Consider the following 309-residue polypeptide: Low density lipoprotein receptor adapter protein 1-B (309 aa).

The PID domain maps to 41–195; sequence LLEGMLFHLK…SDGEGASSSQ (155 aa). Positions 179–201 are disordered; that stretch reads DKREKSGSDGEGASSSQSDGSSS. The segment covering 189–201 has biased composition (low complexity); it reads EGASSSQSDGSSS. The short motif at 213–217 is the Clathrin box element; that stretch reads LLDFE. The AP-2 complex binding stretch occupies residues 250–277; the sequence is WELDDGLDEAFARLAESRTNPQVLDIGL. A [DE]-X(1,2)-F-X-X-[FL]-X-X-X-R motif motif is present at residues 258-267; it reads EAFARLAESR.

As to quaternary structure, interacts (via PID domain) with ldlr (via NPXY motif). Binds to soluble clathrin trimers and to the adapter protein complex 2 (AP-2, beta 2 subunit). Binds to phosphoinositides, which regulate clathrin bud assembly at the cell surface. Interacts with the VLDL receptor (vldlr). Interacts with the vitellogenin receptor. Expressed at high level during oogenesis and embryogenesis. Found at low level in the adult liver and spleen. Found at very low level in testis and heart. Not found in the oocyte vegetal cortex.

It is found in the cytoplasm. Adapter protein (clathrin-associated sorting protein (CLASP)) required for efficient endocytosis of the LDL receptor (LDLR). Also involved in the vitellogenin receptor mediated endocytosis of nutrients during oogenesis. This chain is Low density lipoprotein receptor adapter protein 1-B, found in Xenopus laevis (African clawed frog).